Reading from the N-terminus, the 117-residue chain is Large ribosomal subunit protein eL18 (117 aa).

Belongs to the eukaryotic ribosomal protein eL18 family.

The protein is Large ribosomal subunit protein eL18 of Halobacterium salinarum (strain ATCC 29341 / DSM 671 / R1).